The chain runs to 341 residues: S-adenosylmethionine:tRNA ribosyltransferase-isomerase (341 aa).

This sequence belongs to the QueA family. In terms of assembly, monomer.

The protein localises to the cytoplasm. The catalysed reaction is 7-aminomethyl-7-carbaguanosine(34) in tRNA + S-adenosyl-L-methionine = epoxyqueuosine(34) in tRNA + adenine + L-methionine + 2 H(+). Its pathway is tRNA modification; tRNA-queuosine biosynthesis. Transfers and isomerizes the ribose moiety from AdoMet to the 7-aminomethyl group of 7-deazaguanine (preQ1-tRNA) to give epoxyqueuosine (oQ-tRNA). This chain is S-adenosylmethionine:tRNA ribosyltransferase-isomerase, found in Caldanaerobacter subterraneus subsp. tengcongensis (strain DSM 15242 / JCM 11007 / NBRC 100824 / MB4) (Thermoanaerobacter tengcongensis).